A 642-amino-acid chain; its full sequence is ATP-dependent zinc metalloprotease FtsH (642 aa).

Topologically, residues 1 to 6 are cytoplasmic; sequence MGRFTK. Residues 7-27 traverse the membrane as a helical segment; it reads NIVLYLLIIAAFVIAIDAFSG. The Extracellular portion of the chain corresponds to 28–101; sequence QSANKSELSY…TAAPPEQPAW (74 aa). The helical transmembrane segment at 102–122 threads the bilayer; it reads WMSLLGSAIPIIILVVLFFFI. The Cytoplasmic segment spans residues 123 to 642; the sequence is MQQTQGGGGR…LSEASSNEIK (520 aa). 194 to 201 is an ATP binding site; it reads GPPGTGKT. His416 is a binding site for Zn(2+). Glu417 is an active-site residue. 2 residues coordinate Zn(2+): His420 and Asp492. The span at 597–610 shows a compositional bias: basic and acidic residues; it reads TTKEPEAEEPKVAS. Positions 597-642 are disordered; sequence TTKEPEAEEPKVASEADSSIVPEGVDAKKTTSTVADLSEASSNEIK. A compositionally biased stretch (polar residues) spans 626-642; the sequence is TTSTVADLSEASSNEIK.

In the central section; belongs to the AAA ATPase family. The protein in the C-terminal section; belongs to the peptidase M41 family. In terms of assembly, homohexamer. Requires Zn(2+) as cofactor.

It is found in the cell membrane. Its function is as follows. Acts as a processive, ATP-dependent zinc metallopeptidase for both cytoplasmic and membrane proteins. Plays a role in the quality control of integral membrane proteins. In Veillonella parvula (strain ATCC 10790 / DSM 2008 / CCUG 5123 / JCM 12972 / NCTC 11810 / Te3) (Veillonella alcalescens), this protein is ATP-dependent zinc metalloprotease FtsH.